Here is a 355-residue protein sequence, read N- to C-terminus: Holliday junction branch migration complex subunit RuvB (355 aa).

Residues 1 to 26 (MSIQTDDFASSSPAARRVVSTAPASP) form a disordered region. Positions 5-196 (TDDFASSSPA…FGIVARLEFY (192 aa)) are large ATPase domain (RuvB-L). Low complexity predominate over residues 9–22 (ASSSPAARRVVSTA). ATP is bound by residues Leu-35, Arg-36, Gly-77, Lys-80, Thr-81, Thr-82, 143–145 (EDY), Arg-186, Tyr-196, and Arg-233. Thr-81 lines the Mg(2+) pocket. A small ATPAse domain (RuvB-S) region spans residues 197–267 (SVEELARIVT…IADKALAMLD (71 aa)). The segment at 270 to 355 (PQGFDVMDRK…TTSGSELFDA (86 aa)) is head domain (RuvB-H). DNA-binding residues include Arg-325 and Arg-330.

It belongs to the RuvB family. In terms of assembly, homohexamer. Forms an RuvA(8)-RuvB(12)-Holliday junction (HJ) complex. HJ DNA is sandwiched between 2 RuvA tetramers; dsDNA enters through RuvA and exits via RuvB. An RuvB hexamer assembles on each DNA strand where it exits the tetramer. Each RuvB hexamer is contacted by two RuvA subunits (via domain III) on 2 adjacent RuvB subunits; this complex drives branch migration. In the full resolvosome a probable DNA-RuvA(4)-RuvB(12)-RuvC(2) complex forms which resolves the HJ.

It is found in the cytoplasm. The enzyme catalyses ATP + H2O = ADP + phosphate + H(+). Its function is as follows. The RuvA-RuvB-RuvC complex processes Holliday junction (HJ) DNA during genetic recombination and DNA repair, while the RuvA-RuvB complex plays an important role in the rescue of blocked DNA replication forks via replication fork reversal (RFR). RuvA specifically binds to HJ cruciform DNA, conferring on it an open structure. The RuvB hexamer acts as an ATP-dependent pump, pulling dsDNA into and through the RuvAB complex. RuvB forms 2 homohexamers on either side of HJ DNA bound by 1 or 2 RuvA tetramers; 4 subunits per hexamer contact DNA at a time. Coordinated motions by a converter formed by DNA-disengaged RuvB subunits stimulates ATP hydrolysis and nucleotide exchange. Immobilization of the converter enables RuvB to convert the ATP-contained energy into a lever motion, pulling 2 nucleotides of DNA out of the RuvA tetramer per ATP hydrolyzed, thus driving DNA branch migration. The RuvB motors rotate together with the DNA substrate, which together with the progressing nucleotide cycle form the mechanistic basis for DNA recombination by continuous HJ branch migration. Branch migration allows RuvC to scan DNA until it finds its consensus sequence, where it cleaves and resolves cruciform DNA. This Methylibium petroleiphilum (strain ATCC BAA-1232 / LMG 22953 / PM1) protein is Holliday junction branch migration complex subunit RuvB.